Reading from the N-terminus, the 433-residue chain is Enolase (433 aa).

At Ser-1 the chain carries N-acetylserine. (2R)-2-phosphoglycerate is bound by residues Ser-36 and His-157. Residue Glu-209 is the Proton donor of the active site. The Mn(2+) site is built by Asp-244, Glu-294, and Asp-319. Residues Lys-344, Arg-373, and Ser-374 each contribute to the (2R)-2-phosphoglycerate site. Lys-344 serves as the catalytic Proton acceptor.

The protein belongs to the enolase family. In terms of assembly, homodimer. Mg(2+) serves as cofactor.

The protein localises to the cytoplasm. It catalyses the reaction (2R)-2-phosphoglycerate = phosphoenolpyruvate + H2O. Its pathway is carbohydrate degradation; glycolysis; pyruvate from D-glyceraldehyde 3-phosphate: step 4/5. Its activity is regulated as follows. Inhibited by 2-phosphoglycolic acid. In Homarus gammarus (European lobster), this protein is Enolase.